A 341-amino-acid chain; its full sequence is Endolytic peptidoglycan transglycosylase RlpA (341 aa).

A signal peptide spans 1–26; that stretch reads MSKRVRSSLILPAVCGLGLAAVLLSS. Residue C27 is the site of N-palmitoyl cysteine attachment. C27 is lipidated: S-diacylglycerol cysteine. The SPOR domain occupies 260 to 341; it reads SLPADGLYLQ…LGQPTLVRPD (82 aa).

This sequence belongs to the RlpA family.

It localises to the cell membrane. In terms of biological role, lytic transglycosylase with a strong preference for naked glycan strands that lack stem peptides. Required for efficient separation of daughter cells and maintenance of rod shape. The chain is Endolytic peptidoglycan transglycosylase RlpA from Pseudomonas aeruginosa (strain UCBPP-PA14).